Reading from the N-terminus, the 75-residue chain is Endogenous retrovirus group K member 10 Np9 protein (75 aa).

Residues 21–43 form a disordered region; sequence PTAPKRQRPSRTGHDDDGGFVEK. Residues 32–43 show a composition bias toward basic and acidic residues; that stretch reads TGHDDDGGFVEK.

Its subcellular location is the nucleus. Functionally, may possess a function in tumorigenesis. This is Endogenous retrovirus group K member 10 Np9 protein (ERVK-10) from Homo sapiens (Human).